The following is a 231-amino-acid chain: Large ribosomal subunit protein uL1 (231 aa).

This sequence belongs to the universal ribosomal protein uL1 family. In terms of assembly, part of the 50S ribosomal subunit.

Its function is as follows. Binds directly to 23S rRNA. The L1 stalk is quite mobile in the ribosome, and is involved in E site tRNA release. Protein L1 is also a translational repressor protein, it controls the translation of the L11 operon by binding to its mRNA. This Thioalkalivibrio sulfidiphilus (strain HL-EbGR7) protein is Large ribosomal subunit protein uL1.